The chain runs to 483 residues: Nuc-1 negative regulatory protein preg (483 aa).

Low complexity-rich tracts occupy residues 1–32, 60–80, and 176–200; these read MLTR…PRPS, SSRR…PISI, and ASAL…AVAV. 3 disordered regions span residues 1 to 112, 164 to 234, and 434 to 483; these read MLTR…SRPQ, NTVG…SQGD, and CPEP…RHAT. Residues 435–473 are compositionally biased toward acidic residues; that stretch reads PEPEEADDEDEDEELDESDAIGDDDDDIDGEGGEREEET.

Belongs to the cyclin family.

In terms of biological role, negative regulator, together with pgov, of the transcriptional activator nuc-1, which controls the expression of phosphorous acquisition enzymes. In Neurospora crassa (strain ATCC 24698 / 74-OR23-1A / CBS 708.71 / DSM 1257 / FGSC 987), this protein is Nuc-1 negative regulatory protein preg (preg).